We begin with the raw amino-acid sequence, 67 residues long: DNA-directed RNA polymerase subunit omega (67 aa).

It belongs to the RNA polymerase subunit omega family. In terms of assembly, the RNAP catalytic core consists of 2 alpha, 1 beta, 1 beta' and 1 omega subunit. When a sigma factor is associated with the core the holoenzyme is formed, which can initiate transcription.

It catalyses the reaction RNA(n) + a ribonucleoside 5'-triphosphate = RNA(n+1) + diphosphate. Its function is as follows. Promotes RNA polymerase assembly. Latches the N- and C-terminal regions of the beta' subunit thereby facilitating its interaction with the beta and alpha subunits. The polypeptide is DNA-directed RNA polymerase subunit omega (Exiguobacterium sibiricum (strain DSM 17290 / CCUG 55495 / CIP 109462 / JCM 13490 / 255-15)).